The primary structure comprises 213 residues: Superoxide dismutase [Fe] (213 aa).

Residues His26, His73, Asp156, and His160 each coordinate Fe cation.

This sequence belongs to the iron/manganese superoxide dismutase family. As to quaternary structure, homodimer. Fe cation is required as a cofactor.

The enzyme catalyses 2 superoxide + 2 H(+) = H2O2 + O2. Functionally, destroys superoxide anion radicals which are normally produced within the cells and which are toxic to biological systems. This Helicobacter pylori (strain J99 / ATCC 700824) (Campylobacter pylori J99) protein is Superoxide dismutase [Fe] (sodB).